The primary structure comprises 367 residues: Alpha-2-HS-glycoprotein (367 aa).

An N-terminal signal peptide occupies residues 1 to 18 (MKSLVLLLCLAQLWGCHS). The Cystatin fetuin-A-type 1 domain maps to 27–133 (YRQPNCDDPE…KFSVVYAKCD (107 aa)). 6 cysteine pairs are disulfide-bonded: C32/C358, C89/C100, C114/C132, C146/C149, C208/C219, and C230/C247. 3 positions are modified to phosphoserine: S134, S135, and S138. Residues 144–255 (KVCQDCPLLA…TCTVFQTQPV (112 aa)) enclose the Cystatin fetuin-A-type 2 domain. N156 and N176 each carry an N-linked (GlcNAc...) asparagine glycan. The segment at 254-301 (PVTSQPQPEGANETVPTPVVDPDAPPSPPLGAPGLPPAGSPPDSHVLL) is disordered. N265 is a glycosylation site (N-linked (GlcNAc...) asparagine). Over residues 276–293 (DAPPSPPLGAPGLPPAGS) the composition is skewed to pro residues. A propeptide spans 301–340 (LAAPPGHQLHWAHYDLRHTFMGVVSLGSPSGEASHPRKTR) (connecting peptide). The residue at position 319 (T319) is a Phosphothreonine. Residues S325, S328, and S330 each carry the phosphoserine modification. T339 carries O-linked (GalNAc...) threonine glycosylation.

The protein belongs to the fetuin family. As to quaternary structure, alpha-2-HS glycoprotein derives from this precursor, when the connecting peptide is cleaved off. The two chains A and B are held together by a single disulfide bond. Post-translationally, phosphorylated by FAM20C in the extracellular medium.

Its subcellular location is the secreted. Promotes endocytosis, possesses opsonic properties and influences the mineral phase of bone. Shows affinity for calcium and barium ions. The polypeptide is Alpha-2-HS-glycoprotein (AHSG) (Pan troglodytes (Chimpanzee)).